A 344-amino-acid chain; its full sequence is TATA box-binding protein-like 2 (344 aa).

The interval 78 to 143 (NKDRTVTGNK…SNQLSSETPN (66 aa)) is disordered. Residues 110-120 (GSGLNLNSNSS) are compositionally biased toward low complexity. Over residues 134 to 143 (SNQLSSETPN) the composition is skewed to polar residues.

Belongs to the TBP family. Interacts with TAF3.

The protein localises to the cytoplasm. It is found in the nucleus. Transcription factor required in complex with TAF3 for the differentiation of myoblasts into myocytes. The complex replaces TFIID at specific promoters at an early stage in the differentiation process. The polypeptide is TATA box-binding protein-like 2 (Rattus norvegicus (Rat)).